The sequence spans 100 residues: Urease subunit gamma (100 aa).

It belongs to the urease gamma subunit family. As to quaternary structure, heterotrimer of UreA (gamma), UreB (beta) and UreC (alpha) subunits. Three heterotrimers associate to form the active enzyme.

It localises to the cytoplasm. It catalyses the reaction urea + 2 H2O + H(+) = hydrogencarbonate + 2 NH4(+). It participates in nitrogen metabolism; urea degradation; CO(2) and NH(3) from urea (urease route): step 1/1. The polypeptide is Urease subunit gamma (Prochlorococcus marinus (strain MIT 9312)).